Here is a 588-residue protein sequence, read N- to C-terminus: Transcriptional regulatory protein ASH1 (588 aa).

Phosphoserine is present on S56. Disordered regions lie at residues 85–109 (SNTAPASPHHMDYNPISSLTPGNSP), 377–398 (SNNSKSNVRKPSKNKISKQASN), and 417–495 (SSVS…TRHT). Polar residues predominate over residues 99-109 (PISSLTPGNSP). A compositionally biased stretch (basic residues) spans 383-392 (NVRKPSKNKI). Over residues 417–433 (SSVSASSSPSPSTPTKS) the composition is skewed to low complexity. At S465 the chain carries Phosphoserine. Residues 470–493 (PRRSSNSSITKKGSRRSSGSSPTR) show a composition bias toward low complexity. A GATA-type; atypical zinc finger spans residues 499-526 (CVSCHSSDSPCWRPSWSPRKQDQLCNSC).

Component of the RPD3C(L) complex composed of at least ASH1, CTI6, DEP1, PHO23, RPD3, RXT2, RXT3, SAP30, SDS3, SIN3, UME1 and UME6.

It is found in the nucleus. Functionally, component of the RPD3C(L) histone deacetylase complex (HDAC). Responsible for the deacetylation of lysine residues on the N-terminal part of the core histones (H2A, H2B, H3 and H4). Histone deacetylation gives a tag for epigenetic repression and plays an important role in transcriptional regulation, cell cycle progression and developmental events. ASH1 is necessary to repress HO in daughter cells to block mating-type switching through its binding to HO promoter 5'-YTGAT-3' sites. Also involved in pseudohyphal growth. The sequence is that of Transcriptional regulatory protein ASH1 (ASH1) from Saccharomyces cerevisiae (strain ATCC 204508 / S288c) (Baker's yeast).